The following is a 402-amino-acid chain: Formate-dependent phosphoribosylglycinamide formyltransferase (402 aa).

Residues 22–23 (EL) and E82 contribute to the N(1)-(5-phospho-beta-D-ribosyl)glycinamide site. Residues R115, K160, 165–170 (SSGKGQ), 200–203 (EGFV), and E208 contribute to the ATP site. An ATP-grasp domain is found at 120 to 318 (RLAAETLGLP…EFELHARAIL (199 aa)). Mg(2+) contacts are provided by E277 and E289. N(1)-(5-phospho-beta-D-ribosyl)glycinamide-binding positions include D296, K365, and 372 to 373 (RR).

Belongs to the PurK/PurT family. As to quaternary structure, homodimer.

The catalysed reaction is N(1)-(5-phospho-beta-D-ribosyl)glycinamide + formate + ATP = N(2)-formyl-N(1)-(5-phospho-beta-D-ribosyl)glycinamide + ADP + phosphate + H(+). The protein operates within purine metabolism; IMP biosynthesis via de novo pathway; N(2)-formyl-N(1)-(5-phospho-D-ribosyl)glycinamide from N(1)-(5-phospho-D-ribosyl)glycinamide (formate route): step 1/1. Its function is as follows. Involved in the de novo purine biosynthesis. Catalyzes the transfer of formate to 5-phospho-ribosyl-glycinamide (GAR), producing 5-phospho-ribosyl-N-formylglycinamide (FGAR). Formate is provided by PurU via hydrolysis of 10-formyl-tetrahydrofolate. This Mycobacteroides abscessus (strain ATCC 19977 / DSM 44196 / CCUG 20993 / CIP 104536 / JCM 13569 / NCTC 13031 / TMC 1543 / L948) (Mycobacterium abscessus) protein is Formate-dependent phosphoribosylglycinamide formyltransferase.